The sequence spans 304 residues: MTVRESAARTAAPSRGTWLEHEPLAGHTSWRVGGPAERFYQPADLDDLVQFLRALSPQEPLFWLGLGSNVLVRDGGIRGTVVCTKNRLRVIEARGPACVYAEAGIPCAHVARFCTERDWVGAEFLAGIPGTLGGALAMNAGAFGGETWSLVRRVLTVNRGGRTIWRAPEEFEVGYRHVQGPEGEWFVAAELELAPGDGRAGRERIKALLARRSATQPTHQPSCGSVFRNPPSDFAARLIEACGLKGHTVGGAQVSLKHANFIVNSGDATAADIETLIAEVRDRVALLCGVWLEPEVRIVGEAQA.

The 166-residue stretch at 31–196 (RVGGPAERFY…VAAELELAPG (166 aa)) folds into the FAD-binding PCMH-type domain. Arg-176 is an active-site residue. The active-site Proton donor is the Ser-225. Residue Glu-295 is part of the active site.

This sequence belongs to the MurB family. Requires FAD as cofactor.

It localises to the cytoplasm. The catalysed reaction is UDP-N-acetyl-alpha-D-muramate + NADP(+) = UDP-N-acetyl-3-O-(1-carboxyvinyl)-alpha-D-glucosamine + NADPH + H(+). It functions in the pathway cell wall biogenesis; peptidoglycan biosynthesis. In terms of biological role, cell wall formation. This Methylococcus capsulatus (strain ATCC 33009 / NCIMB 11132 / Bath) protein is UDP-N-acetylenolpyruvoylglucosamine reductase.